Here is a 285-residue protein sequence, read N- to C-terminus: Pantothenate synthetase (285 aa).

An ATP-binding site is contributed by 32-39 (MGALHDGH). Catalysis depends on His-39, which acts as the Proton donor. Gln-63 contributes to the (R)-pantoate binding site. Residue Gln-63 participates in beta-alanine binding. 149 to 152 (GEKD) is an ATP binding site. Gln-155 contributes to the (R)-pantoate binding site. ATP contacts are provided by residues Val-178 and 186 to 189 (MSSR).

Belongs to the pantothenate synthetase family. As to quaternary structure, homodimer.

It localises to the cytoplasm. It catalyses the reaction (R)-pantoate + beta-alanine + ATP = (R)-pantothenate + AMP + diphosphate + H(+). Its pathway is cofactor biosynthesis; (R)-pantothenate biosynthesis; (R)-pantothenate from (R)-pantoate and beta-alanine: step 1/1. Functionally, catalyzes the condensation of pantoate with beta-alanine in an ATP-dependent reaction via a pantoyl-adenylate intermediate. In Ruegeria pomeroyi (strain ATCC 700808 / DSM 15171 / DSS-3) (Silicibacter pomeroyi), this protein is Pantothenate synthetase.